A 154-amino-acid chain; its full sequence is UPF0178 protein YaiI (154 aa).

The protein belongs to the UPF0178 family.

The polypeptide is UPF0178 protein YaiI (Escherichia coli (strain ATCC 8739 / DSM 1576 / NBRC 3972 / NCIMB 8545 / WDCM 00012 / Crooks)).